The primary structure comprises 158 residues: Ribonuclease H (158 aa).

The region spanning 3–144 (ELKLIHIFTD…CDQLARAAAE (142 aa)) is the RNase H type-1 domain. Mg(2+) contacts are provided by D12, E50, D72, and D136.

The protein belongs to the RNase H family. In terms of assembly, monomer. It depends on Mg(2+) as a cofactor.

It is found in the cytoplasm. The enzyme catalyses Endonucleolytic cleavage to 5'-phosphomonoester.. Endonuclease that specifically degrades the RNA of RNA-DNA hybrids. The sequence is that of Ribonuclease H from Shewanella sp. (strain MR-7).